The chain runs to 921 residues: Isoleucine--tRNA ligase (921 aa).

The 'HIGH' region signature appears at 57 to 67 (PYANGDIHMGH). Glu-552 is an L-isoleucyl-5'-AMP binding site. The 'KMSKS' region motif lies at 593–597 (KMSKS). Lys-596 contributes to the ATP binding site. The Zn(2+) site is built by Cys-888, Cys-891, Cys-908, and Cys-911.

This sequence belongs to the class-I aminoacyl-tRNA synthetase family. IleS type 1 subfamily. As to quaternary structure, monomer. It depends on Zn(2+) as a cofactor.

It localises to the cytoplasm. The enzyme catalyses tRNA(Ile) + L-isoleucine + ATP = L-isoleucyl-tRNA(Ile) + AMP + diphosphate. In terms of biological role, catalyzes the attachment of isoleucine to tRNA(Ile). As IleRS can inadvertently accommodate and process structurally similar amino acids such as valine, to avoid such errors it has two additional distinct tRNA(Ile)-dependent editing activities. One activity is designated as 'pretransfer' editing and involves the hydrolysis of activated Val-AMP. The other activity is designated 'posttransfer' editing and involves deacylation of mischarged Val-tRNA(Ile). This is Isoleucine--tRNA ligase from Bacillus anthracis (strain A0248).